Consider the following 850-residue polypeptide: MKFVKYFLILAVCCILLGAGSIYGLYRYIEPQLPDVATLKDVRLQIPMQIYSADGELIAQYGEKRRIPVTLDQIPPEMVKAFIATEDSRFYEHHGVDPVGIFRAASVALFSGHASQGASTITQQLARNFFLSPERTLMRKIKEVFLAIRIEQLLTKDEILELYLNKIYLGYRAYGVGAAAQVYFGKTVDQLTLNEMAVIAGLPKAPSTFNPLYSMDRAVARRNVVLSRMLDEGYITQQQFDQTRTEAINANYHAPEIAFSAPYLSEMVRQEMYNRYGESAYEDGYRIYTTITRKVQQAAQQAVRNNVLDYDMRHGYRGPANVLWKVGESAWDNNKITDTLKALPTYGPLLPAAVTSANPQQATAMLADGSTVALSMEGVRWARPYRSDTQQGPTPRKVTDVLQTGQQIWVRQVGDAWWLAQVPEVNSALVSINPQNGAVMALVGGFDFNQSKFNRATQALRQVGSNIKPFLYTAAMDKGLTLASMLNDVPISRWDASAGSDWQPKNSPPQYAGPIRLRQGLGQSKNVVMVRAMRAMGVDYAAEYLQRFGFPAQNIVHTESLALGSASFTPMQVARGYAVMANGGFLVDPWFISKIENDQGGVIFEAKPKVACPECDIPVIYGDTQKSNVLENNDVEDVAISREQQNVSVPMPQLEQANQALVAKTGAQEYAPHVINTPLAFLIKSALNTNIFGEPGWQGTGWRAGRDLQRRDIGGKTGTTNSSKDAWFSGYGPGVVTSVWIGFDDHRRNLGHTTASGAIKDQISGYEGGAKSAQPAWDAYMKAVLEGVPEQPLTPPPGIVTVNIDRSTGQLANGGNSREEYFIEGTQPTQQAVHEVGTTIIDNGEAQELF.

The Cytoplasmic portion of the chain corresponds to 1 to 5; the sequence is MKFVK. A helical; Signal-anchor for type II membrane protein membrane pass occupies residues 6-26; it reads YFLILAVCCILLGAGSIYGLY. Over 27 to 850 the chain is Periplasmic; it reads RYIEPQLPDV…IDNGEAQELF (824 aa). The tract at residues 48–216 is transglycosylase; sequence MQIYSADGEL…STFNPLYSMD (169 aa). Glutamate 86 serves as the catalytic Proton donor; for transglycosylase activity. The interval 400–710 is transpeptidase; it reads DVLQTGQQIW…GWRAGRDLQR (311 aa). Serine 465 (acyl-ester intermediate; for transpeptidase activity) is an active-site residue.

It in the N-terminal section; belongs to the glycosyltransferase 51 family. This sequence in the C-terminal section; belongs to the transpeptidase family.

The protein localises to the cell inner membrane. The enzyme catalyses [GlcNAc-(1-&gt;4)-Mur2Ac(oyl-L-Ala-gamma-D-Glu-L-Lys-D-Ala-D-Ala)](n)-di-trans,octa-cis-undecaprenyl diphosphate + beta-D-GlcNAc-(1-&gt;4)-Mur2Ac(oyl-L-Ala-gamma-D-Glu-L-Lys-D-Ala-D-Ala)-di-trans,octa-cis-undecaprenyl diphosphate = [GlcNAc-(1-&gt;4)-Mur2Ac(oyl-L-Ala-gamma-D-Glu-L-Lys-D-Ala-D-Ala)](n+1)-di-trans,octa-cis-undecaprenyl diphosphate + di-trans,octa-cis-undecaprenyl diphosphate + H(+). It catalyses the reaction Preferential cleavage: (Ac)2-L-Lys-D-Ala-|-D-Ala. Also transpeptidation of peptidyl-alanyl moieties that are N-acyl substituents of D-alanine.. Its pathway is cell wall biogenesis; peptidoglycan biosynthesis. In terms of biological role, cell wall formation. Synthesis of cross-linked peptidoglycan from the lipid intermediates. The enzyme has a penicillin-insensitive transglycosylase N-terminal domain (formation of linear glycan strands) and a penicillin-sensitive transpeptidase C-terminal domain (cross-linking of the peptide subunits). In Escherichia coli (strain K12), this protein is Penicillin-binding protein 1A (mrcA).